The following is a 196-amino-acid chain: 3-dehydroquinate dehydratase (196 aa).

3-dehydroquinate contacts are provided by residues 23–25 and R45; that span reads ELR. Catalysis depends on H98, which acts as the Proton donor/acceptor. The active-site Schiff-base intermediate with substrate is the K122. R159 and Q182 together coordinate 3-dehydroquinate.

The protein belongs to the type-I 3-dehydroquinase family. Homodimer.

The enzyme catalyses 3-dehydroquinate = 3-dehydroshikimate + H2O. It participates in metabolic intermediate biosynthesis; chorismate biosynthesis; chorismate from D-erythrose 4-phosphate and phosphoenolpyruvate: step 3/7. In terms of biological role, involved in the third step of the chorismate pathway, which leads to the biosynthesis of aromatic amino acids. Catalyzes the cis-dehydration of 3-dehydroquinate (DHQ) and introduces the first double bond of the aromatic ring to yield 3-dehydroshikimate. This Archaeoglobus fulgidus (strain ATCC 49558 / DSM 4304 / JCM 9628 / NBRC 100126 / VC-16) protein is 3-dehydroquinate dehydratase.